A 388-amino-acid polypeptide reads, in one-letter code: S-adenosylmethionine synthase (388 aa).

Residue histidine 16 coordinates ATP. Aspartate 18 is a binding site for Mg(2+). Glutamate 44 provides a ligand contact to K(+). Residues glutamate 57 and glutamine 100 each contribute to the L-methionine site. Positions glutamine 100 to arginine 110 are flexible loop. ATP-binding positions include aspartate 165–lysine 167, aspartate 240, arginine 246–lysine 247, alanine 263, and lysine 267. Residue aspartate 240 participates in L-methionine binding. Lysine 271 is an L-methionine binding site.

The protein belongs to the AdoMet synthase family. Homotetramer; dimer of dimers. Mg(2+) serves as cofactor. It depends on K(+) as a cofactor.

It is found in the cytoplasm. It carries out the reaction L-methionine + ATP + H2O = S-adenosyl-L-methionine + phosphate + diphosphate. It functions in the pathway amino-acid biosynthesis; S-adenosyl-L-methionine biosynthesis; S-adenosyl-L-methionine from L-methionine: step 1/1. Functionally, catalyzes the formation of S-adenosylmethionine (AdoMet) from methionine and ATP. The overall synthetic reaction is composed of two sequential steps, AdoMet formation and the subsequent tripolyphosphate hydrolysis which occurs prior to release of AdoMet from the enzyme. The polypeptide is S-adenosylmethionine synthase (Acinetobacter baylyi (strain ATCC 33305 / BD413 / ADP1)).